The chain runs to 83 residues: Hainantoxin-III 2 (83 aa).

A signal peptide spans 1–21 (MKASMYLALAGLVLLFVVGYA). The propeptide occupies 22 to 48 (SESEEKEFPRELLSKIFAVDDFKGEER). 3 disulfides stabilise this stretch: Cys50/Cys65, Cys57/Cys70, and Cys64/Cys77. A Leucine amide modification is found at Leu81.

This sequence belongs to the neurotoxin 10 (Hwtx-1) family. 15 (Hntx-3) subfamily. Monomer. As to expression, expressed by the venom gland.

It is found in the secreted. Its function is as follows. Selective antagonist of neuronal tetrodotoxin (TTX)-sensitive voltage-gated sodium channels (IC(50)=1270 nM on Nav1.1/SCN1A, 270 nM on Nav1.2/SCN2A, 491 nM on Nav1.3/SCN3A and 232 nM on Nav1.7/SCN9A). This toxin suppress Nav1.7 current amplitude without significantly altering the activation, inactivation, and repriming kinetics. Short extreme depolarizations partially activate the toxin-bound channel, indicating voltage-dependent inhibition of this toxin. This toxin increases the deactivation of the Nav1.7 current after extreme depolarizations. The toxin-Nav1.7 complex is gradually dissociated upon prolonged strong depolarizations in a voltage-dependent manner, and the unbound toxin rebinds to Nav1.7 after a long repolarization. Moreover, analysis of chimeric channels showed that the DIIS3-S4 linker is critical for toxin binding to Nav1.7. These data are consistent with this toxin interacting with Nav1.7 site 4 and trapping the domain II voltage sensor in the closed state. In Cyriopagopus hainanus (Chinese bird spider), this protein is Hainantoxin-III 2.